The chain runs to 356 residues: Cytochrome c oxidase subunit 2 (356 aa).

The first 20 residues, 1–20 (MVKHWRLILLLALVPLLLSG), serve as a signal peptide directing secretion. Cysteine 21 is lipidated: N-palmitoyl cysteine. Cysteine 21 carries S-diacylglycerol cysteine lipidation. The Extracellular segment spans residues 21 to 47 (CGKPFLSTLKPAGEVADKQYDLTVLST). A cytochrome c oxidase subunit II region spans residues 21-257 (CGKPFLSTLK…KNYKSTAESD (237 aa)). Residues 48-66 (LIMVVVVAVVSVIFFYVIV) traverse the membrane as a helical segment. Over 67-87 (RFRRSRVGENTIPKQVEGNKF) the chain is Cytoplasmic. A helical membrane pass occupies residues 88 to 106 (LEITWTVIPILLLIILVIP). The Extracellular segment spans residues 107-356 (VVLYTLELAD…YLKGLKAESK (250 aa)). Histidine 176, cysteine 217, cysteine 221, and histidine 225 together coordinate Cu cation. Positions 258–356 (LAKQGEELFK…YLKGLKAESK (99 aa)) constitute a Cytochrome c domain. Heme c is bound by residues cysteine 271, cysteine 274, histidine 275, and methionine 329.

This sequence belongs to the cytochrome c oxidase subunit 2 family. It depends on Cu cation as a cofactor. Heme c is required as a cofactor.

It is found in the cell membrane. It catalyses the reaction 4 Fe(II)-[cytochrome c] + O2 + 8 H(+)(in) = 4 Fe(III)-[cytochrome c] + 2 H2O + 4 H(+)(out). Functionally, subunits I and II form the functional core of the enzyme complex. Electrons originating in cytochrome c are transferred via heme a and Cu(A) to the binuclear center formed by heme a3 and Cu(B). The polypeptide is Cytochrome c oxidase subunit 2 (ctaC) (Bacillus subtilis (strain 168)).